The sequence spans 104 residues: Iron-sulfur cluster assembly protein CyaY (104 aa).

This sequence belongs to the frataxin family.

Its function is as follows. Involved in iron-sulfur (Fe-S) cluster assembly. May act as a regulator of Fe-S biogenesis. This Vibrio vulnificus (strain CMCP6) protein is Iron-sulfur cluster assembly protein CyaY.